A 146-amino-acid polypeptide reads, in one-letter code: MTKKIEEKIEGVIESLGYLLYDVSLVKENEQHILRVSLKNPNGAVSLDICQQVSEIISPLLDVCDFIQDAYILEVSSMGLERTLKTPKHFKLSLGEKVEVKLTNKESFQAVLKDANDLSADFELEDHAIKSVEYKDLKKVKTLFEW.

Belongs to the RimP family.

It is found in the cytoplasm. In terms of biological role, required for maturation of 30S ribosomal subunits. The chain is Ribosome maturation factor RimP from Helicobacter pylori (strain G27).